The sequence spans 204 residues: Putative 3-methyladenine DNA glycosylase (204 aa).

Belongs to the DNA glycosylase MPG family.

The chain is Putative 3-methyladenine DNA glycosylase from Bacillus mycoides (strain KBAB4) (Bacillus weihenstephanensis).